Reading from the N-terminus, the 793-residue chain is E3 UFM1-protein ligase 1 (793 aa).

The required for E3 UFM1-protein ligase activity stretch occupies residues 2–212 (AADWEEIRRL…INNLLNLYGF (211 aa)). Disordered stretches follow at residues 405–472 (ALLE…RNKL) and 745–793 (GAEK…SVTE). The span at 427-439 (EGGGSVKSGGGGN) shows a compositional bias: gly residues. A compositionally biased stretch (basic and acidic residues) spans 767–781 (SLQRELHSLSRDIKD).

This sequence belongs to the UFL1 family. As to quaternary structure, catalytic component of the UFM1 ribosome E3 ligase (UREL) complex. Interacts with E2-like enzyme UFC1.

It is found in the endoplasmic reticulum membrane. Its subcellular location is the cytoplasm. The protein localises to the cytosol. The protein resides in the nucleus. It localises to the chromosome. In terms of biological role, E3 protein ligase that mediates ufmylation, the covalent attachment of the ubiquitin-like modifier UFM1 to lysine residues on target proteins, and which plays a key role in various processes, such as ribosome recycling, response to DNA damage, interferon response or reticulophagy (also called ER-phagy). As part of the UREL complex, plays a key role in ribosome recycling by catalyzing mono-ufmylation of RPL26/uL24 subunit of the 60S ribosome. Ufmylation of RPL26/uL24 occurs on free 60S ribosomes following ribosome dissociation: it weakens the junction between post-termination 60S subunits and SEC61 translocons, promoting release and recycling of the large ribosomal subunit from the endoplasmic reticulum membrane. Ufmylation of RPL26/uL24 and subsequent 60S ribosome recycling either take place after normal termination of translation or after ribosome stalling during cotranslational translocation at the endoplasmic reticulum. Involved in reticulophagy in response to endoplasmic reticulum stress by mediating ufmylation of proteins such as CYB5R3 and RPN1, thereby promoting lysosomal degradation of ufmylated proteins. Ufmylation in response to endoplasmic reticulum stress is essential for processes such as hematopoiesis, blood vessel morphogenesis or inflammatory response. In Danio rerio (Zebrafish), this protein is E3 UFM1-protein ligase 1.